Here is a 371-residue protein sequence, read N- to C-terminus: S-adenosylmethionine:tRNA ribosyltransferase-isomerase (371 aa).

The protein belongs to the QueA family. In terms of assembly, monomer.

It is found in the cytoplasm. It carries out the reaction 7-aminomethyl-7-carbaguanosine(34) in tRNA + S-adenosyl-L-methionine = epoxyqueuosine(34) in tRNA + adenine + L-methionine + 2 H(+). The protein operates within tRNA modification; tRNA-queuosine biosynthesis. Its function is as follows. Transfers and isomerizes the ribose moiety from AdoMet to the 7-aminomethyl group of 7-deazaguanine (preQ1-tRNA) to give epoxyqueuosine (oQ-tRNA). This Nitratidesulfovibrio vulgaris (strain DP4) (Desulfovibrio vulgaris) protein is S-adenosylmethionine:tRNA ribosyltransferase-isomerase.